A 245-amino-acid chain; its full sequence is Uridylate kinase (245 aa).

12 to 15 serves as a coordination point for ATP; sequence KISG. Gly55 lines the UMP pocket. 2 residues coordinate ATP: Gly56 and Arg60. UMP-binding positions include Asp76 and 137–144; that span reads AGAPYLTT. 3 residues coordinate ATP: Thr164, Tyr171, and Asp174.

The protein belongs to the UMP kinase family. Homohexamer.

The protein localises to the cytoplasm. The catalysed reaction is UMP + ATP = UDP + ADP. Its pathway is pyrimidine metabolism; CTP biosynthesis via de novo pathway; UDP from UMP (UMPK route): step 1/1. Its activity is regulated as follows. Inhibited by UTP. Catalyzes the reversible phosphorylation of UMP to UDP. The protein is Uridylate kinase of Chlamydia trachomatis serovar D (strain ATCC VR-885 / DSM 19411 / UW-3/Cx).